Here is a 949-residue protein sequence, read N- to C-terminus: Protein translocase subunit SecA (949 aa).

Residues Q87, G105 to T109, and D524 contribute to the ATP site. Disordered regions lie at residues P852 to G876 and L896 to K939. C933, C935, C944, and H945 together coordinate Zn(2+).

It belongs to the SecA family. As to quaternary structure, monomer and homodimer. Part of the essential Sec protein translocation apparatus which comprises SecA, SecYEG and auxiliary proteins SecDF-YajC and YidC. The cofactor is Zn(2+).

The protein localises to the cell inner membrane. The protein resides in the cytoplasm. The enzyme catalyses ATP + H2O + cellular proteinSide 1 = ADP + phosphate + cellular proteinSide 2.. In terms of biological role, part of the Sec protein translocase complex. Interacts with the SecYEG preprotein conducting channel. Has a central role in coupling the hydrolysis of ATP to the transfer of proteins into and across the cell membrane, serving both as a receptor for the preprotein-SecB complex and as an ATP-driven molecular motor driving the stepwise translocation of polypeptide chains across the membrane. The polypeptide is Protein translocase subunit SecA (Methylocella silvestris (strain DSM 15510 / CIP 108128 / LMG 27833 / NCIMB 13906 / BL2)).